The following is a 279-amino-acid chain: Proteasome subunit alpha type-1 (279 aa).

Tyr103 is modified (phosphotyrosine). Over residues 235–249 (HVAIAKENDNDTPRN) the composition is skewed to basic and acidic residues. A disordered region spans residues 235–279 (HVAIAKENDNDTPRNDDDDDRPSPPEEPAAGPRDPEVLVATEQRP).

It belongs to the peptidase T1A family. As to quaternary structure, the 26S proteasome consists of a 20S proteasome core and two 19S regulatory subunits. The 20S proteasome core is composed of 28 subunits that are arranged in four stacked rings, resulting in a barrel-shaped structure. The two end rings are each formed by seven alpha subunits, and the two central rings are each formed by seven beta subunits. The catalytic chamber with the active sites is on the inside of the barrel. Interacts with PI31.

It localises to the cytoplasm. The protein localises to the nucleus. Its function is as follows. The proteasome is a multicatalytic proteinase complex which is characterized by its ability to cleave peptides with Arg, Phe, Tyr, Leu, and Glu adjacent to the leaving group at neutral or slightly basic pH. The proteasome has an ATP-dependent proteolytic activity. This is Proteasome subunit alpha type-1 (Prosalpha6) from Drosophila melanogaster (Fruit fly).